Consider the following 253-residue polypeptide: Glucosamine-6-phosphate deaminase (253 aa).

Asp67 serves as the catalytic Proton acceptor; for enolization step. The active-site For ring-opening step is Asn136. His138 acts as the Proton acceptor; for ring-opening step in catalysis. The For ring-opening step role is filled by Glu143.

This sequence belongs to the glucosamine/galactosamine-6-phosphate isomerase family. NagB subfamily.

The catalysed reaction is alpha-D-glucosamine 6-phosphate + H2O = beta-D-fructose 6-phosphate + NH4(+). The protein operates within amino-sugar metabolism; N-acetylneuraminate degradation; D-fructose 6-phosphate from N-acetylneuraminate: step 5/5. In terms of biological role, catalyzes the reversible isomerization-deamination of glucosamine 6-phosphate (GlcN6P) to form fructose 6-phosphate (Fru6P) and ammonium ion. The polypeptide is Glucosamine-6-phosphate deaminase (Thermoanaerobacter sp. (strain X514)).